Consider the following 388-residue polypeptide: Methylthioribose-1-phosphate isomerase (388 aa).

The Proton donor role is filled by D258.

This sequence belongs to the eIF-2B alpha/beta/delta subunits family. MtnA subfamily.

It is found in the cytoplasm. The protein localises to the nucleus. It catalyses the reaction 5-(methylsulfanyl)-alpha-D-ribose 1-phosphate = 5-(methylsulfanyl)-D-ribulose 1-phosphate. It participates in amino-acid biosynthesis; L-methionine biosynthesis via salvage pathway; L-methionine from S-methyl-5-thio-alpha-D-ribose 1-phosphate: step 1/6. Its function is as follows. Catalyzes the interconversion of methylthioribose-1-phosphate (MTR-1-P) into methylthioribulose-1-phosphate (MTRu-1-P). The sequence is that of Methylthioribose-1-phosphate isomerase from Sordaria macrospora (strain ATCC MYA-333 / DSM 997 / K(L3346) / K-hell).